Consider the following 145-residue polypeptide: MKVLIQRVSHASVVVEGQTIGAIDKGLLLFVGIEKTDSTETLERMANKVLAYRVFSDDEGKMNLNVQQIGGGVLSISQFTLAADTQKGLRPSFSCAAPPAEAQALYDKFVNLLKAKHSPIATGEFAADMKVSLLNDGPVTFMLTM.

The Gly-cisPro motif, important for rejection of L-amino acids signature appears at 137–138 (GP).

This sequence belongs to the DTD family. As to quaternary structure, homodimer.

It is found in the cytoplasm. The catalysed reaction is glycyl-tRNA(Ala) + H2O = tRNA(Ala) + glycine + H(+). The enzyme catalyses a D-aminoacyl-tRNA + H2O = a tRNA + a D-alpha-amino acid + H(+). Its function is as follows. An aminoacyl-tRNA editing enzyme that deacylates mischarged D-aminoacyl-tRNAs. Also deacylates mischarged glycyl-tRNA(Ala), protecting cells against glycine mischarging by AlaRS. Acts via tRNA-based rather than protein-based catalysis; rejects L-amino acids rather than detecting D-amino acids in the active site. By recycling D-aminoacyl-tRNA to D-amino acids and free tRNA molecules, this enzyme counteracts the toxicity associated with the formation of D-aminoacyl-tRNA entities in vivo and helps enforce protein L-homochirality. In Saccharophagus degradans (strain 2-40 / ATCC 43961 / DSM 17024), this protein is D-aminoacyl-tRNA deacylase.